We begin with the raw amino-acid sequence, 314 residues long: Bifunctional pinoresinol-lariciresinol reductase (314 aa).

Residues 10-16 (GGTGYIG), arginine 35, and lysine 44 contribute to the NADP(+) site. The Proton acceptor role is filled by lysine 138. Arginine 142 is a binding site for NADP(+). Histidine 270 provides a ligand contact to substrate.

Belongs to the NmrA-type oxidoreductase family. Isoflavone reductase subfamily. In terms of assembly, dimer.

The enzyme catalyses (+)-lariciresinol + NADP(+) = (+)-pinoresinol + NADPH + H(+). The catalysed reaction is (+)-secoisolariciresinol + NADP(+) = (-)-lariciresinol + NADPH + H(+). Its function is as follows. Reductase involved in the lignan justicidin B biosynthesis. Catalyzes the enantioselective conversion of (+)-pinoresinol into (+)-lariciresinol and of (-)-lariciresinol into (+)-secoisolariciresinol. Low activity with the other enantiomers. Abstracts the 4R-hydride from the NADPH cofactor during catalysis. The sequence is that of Bifunctional pinoresinol-lariciresinol reductase (PLR_Lp1) from Linum perenne (Perennial flax).